The following is a 62-amino-acid chain: Large ribosomal subunit protein uL29 (62 aa).

This sequence belongs to the universal ribosomal protein uL29 family.

The chain is Large ribosomal subunit protein uL29 from Enterococcus faecalis (strain ATCC 700802 / V583).